We begin with the raw amino-acid sequence, 1178 residues long: Niemann-Pick type C1-related protein (1178 aa).

Asn41 carries N-linked (GlcNAc...) asparagine glycosylation. Helical transmembrane passes span 157 to 177 (PWLFIMVSLLATAGMSVGIFL) and 412 to 432 (VVEWLRLCAAVLVVFLYTSVV). An SSD domain is found at 414-570 (EWLRLCAAVL…LTFFLAGLSL (157 aa)). A glycan (N-linked (GlcNAc...) asparagine) is linked at Asn433. 4 helical membrane-spanning segments follow: residues 448–468 (GALASLLGYLGGAGLVYLCGV), 478–498 (PFLAIGIGVDDLFVIINAYSL), 516–536 (AGLSITITTLTNVITFIIGAL), and 545–565 (FCIITAGALTWGYVLCLTFFL). Asn621 is a glycosylation site (N-linked (GlcNAc...) asparagine). The helical transmembrane segment at 789 to 809 (ATVLVIFAAVTALAIYGATTL) threads the bilayer. 2 N-linked (GlcNAc...) asparagine glycosylation sites follow: Asn917 and Asn943. 5 helical membrane passes run 986–1006 (FTLTNLSIALVCILAISLLLI), 1013–1033 (IIVVLVVSLVDLWLFGFMALI), 1037–1057 (LSMISMVNLLISIGYSVDFTI), 1080–1100 (IVMGAPVTHGMLSTLLSILAL), and 1114–1134 (MMFMVIVFAYTAGMVLLPVVL).

It belongs to the patched family.

The protein resides in the inner membrane complex. It catalyses the reaction cholesterol(in) = cholesterol(out). Its function is as follows. Likely facilitates the efflux of cholesterol and gangliosides from membranes. Plays a role in the regulation of lipid homeostasis. The protein is Niemann-Pick type C1-related protein of Toxoplasma gondii (strain ATCC 50611 / Me49).